The following is a 295-amino-acid chain: Ribosomal protein L11 methyltransferase (295 aa).

S-adenosyl-L-methionine contacts are provided by threonine 146, glycine 167, aspartate 189, and asparagine 231.

Belongs to the methyltransferase superfamily. PrmA family.

It is found in the cytoplasm. It carries out the reaction L-lysyl-[protein] + 3 S-adenosyl-L-methionine = N(6),N(6),N(6)-trimethyl-L-lysyl-[protein] + 3 S-adenosyl-L-homocysteine + 3 H(+). Functionally, methylates ribosomal protein L11. This is Ribosomal protein L11 methyltransferase from Vibrio cholerae serotype O1 (strain ATCC 39541 / Classical Ogawa 395 / O395).